A 24-amino-acid polypeptide reads, in one-letter code: Lantibiotic 107891 (24 aa).

A (E)-2,3-didehydrobutyrine modification is found at threonine 2. A cross-link (lanthionine (Ser-Cys)) is located at residues 3-7; that stretch reads SWSLC. 6'-chlorotryptophan is present on tryptophan 4. At serine 5 the chain carries 2,3-didehydroalanine (Ser). The beta-methyllanthionine (Thr-Cys) cross-link spans 8-11; it reads TPGC. 2 cross-links (lanthionine (Ser-Cys)) span residues 13 to 20 and 18 to 23; these read SPGGGSNC and SNCSFC. Proline 14 bears the 3,4-dihydroxyproline; in form A1 mark. A 4-hydroxyproline; in form A2 modification is found at proline 14. A cross-link (S-(2-aminovinyl)-D-cysteine (Ser-Cys)) is located at residues 21-24; it reads SFCC.

The protein belongs to the type A lantibiotic family. Maturation of lantibiotics involves the enzymatic conversion of Thr, and Ser into dehydrated AA and the formation of thioether bonds with cysteine. The C-terminal lanthionine undergoes decarboxylation. This is followed by membrane translocation and cleavage of the modified precursor. In terms of processing, occurs in 2 forms, A1 contains 3,4-dihydroxyproline at Pro-14, A2 contains 4-hydroxyproline at Pro-14. The patent report does not provide the stereochemistry of the modified prolines. Post-translationally, the patent report does not describe whether the 2,3-didehydrobutyrine is the E- or Z-isomer. In several diagrams it is shown as the E-isomer.

In terms of biological role, lanthionine-containing peptide antibiotic (lantibiotic) active on Gram-positive bacteria. The bactericidal activity of lantibiotics is based on depolarization of energized bacterial cytoplasmic membranes, initiated by the formation of aqueous transmembrane pores. The chain is Lantibiotic 107891 from Microbispora sp. (strain 107891).